A 616-amino-acid polypeptide reads, in one-letter code: Glutamine--fructose-6-phosphate aminotransferase [isomerizing] (616 aa).

Cys-2 (nucleophile; for GATase activity) is an active-site residue. The Glutamine amidotransferase type-2 domain occupies 2–222; the sequence is CGIIGYSGPR…QERIVALSGD (221 aa). The tract at residues 70-89 is disordered; it reads TGIGHTRWATHGEPSDRNAH. SIS domains lie at 289-428 and 461-606; these read IRDD…LRGF and LAHW…VDRP. The active-site For Fru-6P isomerization activity is Lys-611.

In terms of assembly, homodimer.

The protein resides in the cytoplasm. The enzyme catalyses D-fructose 6-phosphate + L-glutamine = D-glucosamine 6-phosphate + L-glutamate. Its function is as follows. Catalyzes the first step in hexosamine metabolism, converting fructose-6P into glucosamine-6P using glutamine as a nitrogen source. This is Glutamine--fructose-6-phosphate aminotransferase [isomerizing] from Tropheryma whipplei (strain TW08/27) (Whipple's bacillus).